The following is a 416-amino-acid chain: CBL-interacting serine/threonine-protein kinase 21 (416 aa).

Positions 12–264 (YEIGRTIGEG…AEIIIKDSWF (253 aa)) constitute a Protein kinase domain. ATP is bound by residues 18–26 (IGEGNFAKV) and K41. Catalysis depends on D134, which acts as the Proton acceptor. Residues 152-178 (DFGLSAVPKSGDMLSTACGSPCYIAPE) form an activation loop region. S156 is modified (phosphoserine). T167 carries the phosphothreonine modification. The region spanning 291-315 (ASSNFINAFQIIAMSSDLDLSGLFE) is the NAF domain. The segment at 321-351 (RYKTRIGSKNTAQETIKKIEAAATYVSLSVE) is PPI.

The protein belongs to the protein kinase superfamily. CAMK Ser/Thr protein kinase family. SNF1 subfamily. Interacts with CBL9. The cofactor is Mn(2+).

It carries out the reaction L-seryl-[protein] + ATP = O-phospho-L-seryl-[protein] + ADP + H(+). It catalyses the reaction L-threonyl-[protein] + ATP = O-phospho-L-threonyl-[protein] + ADP + H(+). Functionally, CIPK serine-threonine protein kinases interact with CBL proteins. Binding of a CBL protein to the regulatory NAF domain of CIPK protein lead to the activation of the kinase in a calcium-dependent manner. The protein is CBL-interacting serine/threonine-protein kinase 21 (CIPK21) of Arabidopsis thaliana (Mouse-ear cress).